Reading from the N-terminus, the 388-residue chain is Flap endonuclease 1 (388 aa).

The segment at 1–105 (MGIKNLTSLI…GELAKRYARR (105 aa)) is N-domain. A Mg(2+)-binding site is contributed by Asp-34. Residue Arg-71 participates in DNA binding. Positions 87, 159, 161, 180, and 182 each coordinate Mg(2+). The interval 123–254 (DVQKFQKRTI…KKSFDMITKH (132 aa)) is I-domain. Glu-159 contacts DNA. 2 residues coordinate DNA: Gly-232 and Asp-234. Asp-234 contributes to the Mg(2+) binding site. The tract at residues 338-346 (VQTRIDTFF) is interaction with PCNA. A disordered region spans residues 349–388 (IKRPRDEDAGSAKKKQKTVAKPGAAGSKKKPAAKKAAGKK). A compositionally biased stretch (basic residues) spans 375–388 (SKKKPAAKKAAGKK).

Belongs to the XPG/RAD2 endonuclease family. FEN1 subfamily. In terms of assembly, interacts with PCNA. Three molecules of repG bind to one PCNA trimer with each molecule binding to one PCNA monomer. PCNA stimulates the nuclease activity without altering cleavage specificity. It depends on Mg(2+) as a cofactor. In terms of processing, phosphorylated. Phosphorylation upon DNA damage induces relocalization to the nuclear plasma.

The protein resides in the nucleus. It localises to the nucleolus. It is found in the nucleoplasm. The protein localises to the mitochondrion. Functionally, structure-specific nuclease with 5'-flap endonuclease and 5'-3' exonuclease activities involved in DNA replication and repair. During DNA replication, cleaves the 5'-overhanging flap structure that is generated by displacement synthesis when DNA polymerase encounters the 5'-end of a downstream Okazaki fragment. It enters the flap from the 5'-end and then tracks to cleave the flap base, leaving a nick for ligation. Also involved in the long patch base excision repair (LP-BER) pathway, by cleaving within the apurinic/apyrimidinic (AP) site-terminated flap. Acts as a genome stabilization factor that prevents flaps from equilibrating into structures that lead to duplications and deletions. Also possesses 5'-3' exonuclease activity on nicked or gapped double-stranded DNA, and exhibits RNase H activity. Also involved in replication and repair of rDNA and in repairing mitochondrial DNA. The chain is Flap endonuclease 1 from Heterostelium pallidum (strain ATCC 26659 / Pp 5 / PN500) (Cellular slime mold).